A 221-amino-acid polypeptide reads, in one-letter code: DNA mismatch repair protein MutH (221 aa).

This sequence belongs to the MutH family.

It localises to the cytoplasm. Functionally, sequence-specific endonuclease that cleaves unmethylated GATC sequences. It is involved in DNA mismatch repair. In Vibrio cholerae serotype O1 (strain ATCC 39541 / Classical Ogawa 395 / O395), this protein is DNA mismatch repair protein MutH.